Consider the following 376-residue polypeptide: tRNA(Met) cytidine acetate ligase (376 aa).

ATP contacts are provided by residues 7 to 20 (IAEYNPFHNGHYYQ), Gly-102, Asn-160, and Arg-181.

It belongs to the TmcAL family.

It localises to the cytoplasm. The catalysed reaction is cytidine(34) in elongator tRNA(Met) + acetate + ATP = N(4)-acetylcytidine(34) in elongator tRNA(Met) + AMP + diphosphate. In terms of biological role, catalyzes the formation of N(4)-acetylcytidine (ac(4)C) at the wobble position of elongator tRNA(Met), using acetate and ATP as substrates. First activates an acetate ion to form acetyladenylate (Ac-AMP) and then transfers the acetyl group to tRNA to form ac(4)C34. This chain is tRNA(Met) cytidine acetate ligase, found in Exiguobacterium sp. (strain ATCC BAA-1283 / AT1b).